The primary structure comprises 276 residues: Digeranylgeranylglyceryl phosphate synthase (276 aa).

Transmembrane regions (helical) follow at residues 12 to 34 (PHNC…GSVP), 38 to 60 (ILIL…NDYF), 84 to 104 (ALWY…LISL), 107 to 127 (FAFA…LKPL), 146 to 166 (GAIA…AFLV), 202 to 222 (VAAF…KAGV), 224 to 244 (VGYY…YLIL), and 256 to 276 (QLLL…AALM).

This sequence belongs to the UbiA prenyltransferase family. DGGGP synthase subfamily. Requires Mg(2+) as cofactor.

It is found in the cell membrane. It catalyses the reaction sn-3-O-(geranylgeranyl)glycerol 1-phosphate + (2E,6E,10E)-geranylgeranyl diphosphate = 2,3-bis-O-(geranylgeranyl)-sn-glycerol 1-phosphate + diphosphate. Its pathway is membrane lipid metabolism; glycerophospholipid metabolism. Prenyltransferase that catalyzes the transfer of the geranylgeranyl moiety of geranylgeranyl diphosphate (GGPP) to the C2 hydroxyl of (S)-3-O-geranylgeranylglyceryl phosphate (GGGP). This reaction is the second ether-bond-formation step in the biosynthesis of archaeal membrane lipids. The protein is Digeranylgeranylglyceryl phosphate synthase of Thermococcus gammatolerans (strain DSM 15229 / JCM 11827 / EJ3).